Here is a 142-residue protein sequence, read N- to C-terminus: Large ribosomal subunit protein uL13 (142 aa).

The protein belongs to the universal ribosomal protein uL13 family. Part of the 50S ribosomal subunit.

Functionally, this protein is one of the early assembly proteins of the 50S ribosomal subunit, although it is not seen to bind rRNA by itself. It is important during the early stages of 50S assembly. This Syntrophobacter fumaroxidans (strain DSM 10017 / MPOB) protein is Large ribosomal subunit protein uL13.